Here is a 192-residue protein sequence, read N- to C-terminus: Probable GTP-binding protein EngB (192 aa).

Positions 22–192 constitute an EngB-type G domain; that stretch reads GRPEIVFVGR…LLASIDTFTQ (171 aa). GTP is bound by residues 30–37, 57–61, 75–78, 142–145, and 172–174; these read GRSNVGKS, GKTRL, DLPG, TKWD, and YSS. Positions 37 and 59 each coordinate Mg(2+).

This sequence belongs to the TRAFAC class TrmE-Era-EngA-EngB-Septin-like GTPase superfamily. EngB GTPase family. Mg(2+) serves as cofactor.

In terms of biological role, necessary for normal cell division and for the maintenance of normal septation. This chain is Probable GTP-binding protein EngB, found in Chlorobaculum tepidum (strain ATCC 49652 / DSM 12025 / NBRC 103806 / TLS) (Chlorobium tepidum).